Reading from the N-terminus, the 426-residue chain is Citrate transporter (426 aa).

The next 12 helical transmembrane spans lie at 1–21 (MLAI…MSNR), 22–42 (LSAL…SGFG), 59–79 (TGIM…SGLF), 86–106 (ILSF…VLTM), 137–157 (LVLA…PWGG), 176–196 (PLIP…YILG), 232–252 (LLTV…PVLF), 278–298 (AGNA…TGIL), 318–338 (AMGP…TFFM), 343–363 (FYFG…IDAA), 377–397 (LLSP…VSFG), and 406–426 (WAVG…IISF).

The protein belongs to the CitM (TC 2.A.11) transporter family.

It is found in the cell membrane. Functionally, transports the free citrate anion. Probably cotransports citrate and at least three or four protons. The citrate uptake is inhibited by the presence of magnesium ions. In Bacillus subtilis (strain 168), this protein is Citrate transporter (citN).